A 695-amino-acid polypeptide reads, in one-letter code: Nucleoprotein (695 aa).

Coiled-coil stretches lie at residues 316 to 341 and 372 to 399; these read VNVG…RRHE and QTLA…VEDQ. Disordered regions lie at residues 424 to 458 and 483 to 615; these read QARP…SFVD and TSRE…AREA. Residues 438–447 are compositionally biased toward basic and acidic residues; sequence VDDKIEHEST. Polar residues-rich tracts occupy residues 494–505 and 537–552; these read PGQSQDLDNSQG and TTDS…SDNE. Positions 603–606 match the PTAP/PSAP motif motif; that stretch reads PSAP.

The protein belongs to the filoviruses nucleoprotein family. In terms of assembly, homooligomer. Homomultimerizes to form the nucleocapsid. Binds to viral genomic RNA. Interacts with VP35 and VP30 to form the nucleocapsid. Also interacts with VP24 and VP40. Phosphorylated.

It is found in the virion. Its subcellular location is the host cytoplasm. In terms of biological role, encapsidates the genome, protecting it from nucleases. The encapsidated genomic RNA is termed the nucleocapsid and serves as template for transcription and replication. During replication, encapsidation by NP is coupled to RNA synthesis and all replicative products are resistant to nucleases. This Lake Victoria marburgvirus (strain Ozolin-75) (MARV) protein is Nucleoprotein (NP).